The following is a 545-amino-acid chain: Chaperonin GroEL 4 (545 aa).

ATP contacts are provided by residues 30 to 33, K51, 87 to 91, G415, and D495; these read TLGP and DGTTT.

This sequence belongs to the chaperonin (HSP60) family. In terms of assembly, forms a cylinder of 14 subunits composed of two heptameric rings stacked back-to-back. Interacts with the co-chaperonin GroES.

The protein localises to the cytoplasm. The enzyme catalyses ATP + H2O + a folded polypeptide = ADP + phosphate + an unfolded polypeptide.. Its function is as follows. Together with its co-chaperonin GroES, plays an essential role in assisting protein folding. The GroEL-GroES system forms a nano-cage that allows encapsulation of the non-native substrate proteins and provides a physical environment optimized to promote and accelerate protein folding. This is Chaperonin GroEL 4 from Rhizobium meliloti (strain 1021) (Ensifer meliloti).